The chain runs to 428 residues: Arginine biosynthesis bifunctional protein ArgJ, mitochondrial (428 aa).

Substrate contacts are provided by T171, K197, T208, E294, N423, and S428. T208 (nucleophile) is an active-site residue.

It belongs to the ArgJ family. Heterodimer of an alpha and a beta chain. Post-translationally, the alpha and beta chains are autoproteolytically processed from a single precursor protein within the mitochondrion.

It localises to the mitochondrion matrix. It carries out the reaction N(2)-acetyl-L-ornithine + L-glutamate = N-acetyl-L-glutamate + L-ornithine. The catalysed reaction is L-glutamate + acetyl-CoA = N-acetyl-L-glutamate + CoA + H(+). Its pathway is amino-acid biosynthesis; L-arginine biosynthesis; L-ornithine and N-acetyl-L-glutamate from L-glutamate and N(2)-acetyl-L-ornithine (cyclic): step 1/1. It participates in amino-acid biosynthesis; L-arginine biosynthesis; N(2)-acetyl-L-ornithine from L-glutamate: step 1/4. Functionally, catalyzes two activities which are involved in the cyclic version of arginine biosynthesis: the synthesis of acetylglutamate from glutamate and acetyl-CoA, and of ornithine by transacetylation between acetylornithine and glutamate. This is Arginine biosynthesis bifunctional protein ArgJ, mitochondrial from Komagataella phaffii (strain GS115 / ATCC 20864) (Yeast).